The chain runs to 347 residues: tRNA N6-adenosine threonylcarbamoyltransferase (347 aa).

Fe cation is bound by residues H111 and H115. Substrate contacts are provided by residues 134–138 (LVSGG), D167, G180, and N276. D304 is a Fe cation binding site.

The protein belongs to the KAE1 / TsaD family. It depends on Fe(2+) as a cofactor.

Its subcellular location is the cytoplasm. It carries out the reaction L-threonylcarbamoyladenylate + adenosine(37) in tRNA = N(6)-L-threonylcarbamoyladenosine(37) in tRNA + AMP + H(+). Required for the formation of a threonylcarbamoyl group on adenosine at position 37 (t(6)A37) in tRNAs that read codons beginning with adenine. Is involved in the transfer of the threonylcarbamoyl moiety of threonylcarbamoyl-AMP (TC-AMP) to the N6 group of A37, together with TsaE and TsaB. TsaD likely plays a direct catalytic role in this reaction. This chain is tRNA N6-adenosine threonylcarbamoyltransferase, found in Nitrosospira multiformis (strain ATCC 25196 / NCIMB 11849 / C 71).